The primary structure comprises 171 residues: Large ribosomal subunit protein uL10 (171 aa).

The protein belongs to the universal ribosomal protein uL10 family. As to quaternary structure, part of the ribosomal stalk of the 50S ribosomal subunit. The N-terminus interacts with L11 and the large rRNA to form the base of the stalk. The C-terminus forms an elongated spine to which L12 dimers bind in a sequential fashion forming a multimeric L10(L12)X complex.

Forms part of the ribosomal stalk, playing a central role in the interaction of the ribosome with GTP-bound translation factors. The chain is Large ribosomal subunit protein uL10 from Phenylobacterium zucineum (strain HLK1).